The sequence spans 505 residues: Protein disulfide-isomerase A3 (505 aa).

A signal peptide spans 1 to 24; sequence MSVPRPSRAALLLLVPLLALSAGA. Thioredoxin domains follow at residues 25 to 131 and 341 to 483; these read SDVV…KQAG and SRDG…REAT. Residues Cys55 and Cys58 each act as nucleophile in the active site. 3 disulfides stabilise this stretch: Cys55-Cys58, Cys83-Cys90, and Cys404-Cys407. Active-site nucleophile residues include Cys404 and Cys407. Residues 486–505 form a disordered region; the sequence is PVLQEEDKAKKSKKKAKEDL. Over residues 495–505 the composition is skewed to basic residues; it reads KKSKKKAKEDL. Positions 502–505 match the Prevents secretion from ER motif; the sequence is KEDL.

This sequence belongs to the protein disulfide isomerase family.

It is found in the endoplasmic reticulum. It localises to the endoplasmic reticulum lumen. The protein localises to the melanosome. It carries out the reaction Catalyzes the rearrangement of -S-S- bonds in proteins.. In terms of biological role, protein disulfide isomerase that catalyzes the formation, isomerization, and reduction or oxidation of disulfide bonds in client proteins and functions as a protein folding chaperone. The polypeptide is Protein disulfide-isomerase A3 (PDIA3) (Gallus gallus (Chicken)).